The primary structure comprises 334 residues: MTIIVTGAAGFIGSNIVKALNQRGITDIVAVDNLTKGEKFKNLAECEIAHYLDKHEFIRQVREHILPYQNIEAVFHQGACSDTMNHDGLYMMENNYQYTLDLLDWCQDERIPFLYASSAAVYGKGEIFREERELEKPLNVYGYSKFLFDQVLRRRMKEGLTAQVVGFRYFNVYGQHEQHKGRMASVAFHHFHQYREHGYVNLFGSNDGYGNGEQTRDFVSVEDVAKINLYFFDHPELSGIYNLGTGRSQQFNELAAATVNACRAAEGKSELSLKELVEEELIRYIPFPDALKGKYQGFTQADITKLREAGYKEEFFDVKAGVNRYVKWMLENLA.

Residues 11–12 (FI), 32–33 (DN), Lys39, Lys54, 77–81 (QGACS), and Asn94 each bind NADP(+). Residue Tyr141 is the Proton acceptor of the active site. Position 145 (Lys145) interacts with NADP(+). Asn171 is a substrate binding site. The NADP(+) site is built by Val172 and Lys180. Lys180 (proton acceptor) is an active-site residue. Substrate-binding positions include Arg182, His189, 203 to 206 (FGSN), Arg216, and Tyr295.

The protein belongs to the NAD(P)-dependent epimerase/dehydratase family. HldD subfamily. As to quaternary structure, homopentamer. Requires NADP(+) as cofactor.

The enzyme catalyses ADP-D-glycero-beta-D-manno-heptose = ADP-L-glycero-beta-D-manno-heptose. The protein operates within nucleotide-sugar biosynthesis; ADP-L-glycero-beta-D-manno-heptose biosynthesis; ADP-L-glycero-beta-D-manno-heptose from D-glycero-beta-D-manno-heptose 7-phosphate: step 4/4. Its pathway is bacterial outer membrane biogenesis; LOS core biosynthesis. Catalyzes the interconversion between ADP-D-glycero-beta-D-manno-heptose and ADP-L-glycero-beta-D-manno-heptose via an epimerization at carbon 6 of the heptose. The chain is ADP-L-glycero-D-manno-heptose-6-epimerase from Neisseria gonorrhoeae.